Consider the following 1788-residue polypeptide: Protein Shroom3 (1788 aa).

16 disordered regions span residues 1 to 25 (MMQV…STSD), 146 to 174 (EVNS…HGRL), 225 to 263 (KAAG…ESSP), 321 to 367 (GAKS…KQEG), 382 to 401 (PDIS…PLRL), 469 to 488 (NIAS…QADH), 498 to 548 (TVHA…GNKL), 727 to 768 (EISP…VTPT), 793 to 821 (TAEQ…APLT), 876 to 915 (TGRR…SMNS), 1011 to 1067 (SRRH…SASN), 1086 to 1133 (SFKN…PETK), 1171 to 1263 (KRGK…SEAE), 1303 to 1324 (DTES…PPSL), 1404 to 1467 (VPAP…AKSQ), and 1507 to 1538 (ALKE…KRET). Composition is skewed to polar residues over residues 147-161 (VNSS…SRQP) and 230-240 (HSTNTSSNAAQ). 2 stretches are compositionally biased toward basic and acidic residues: residues 245 to 259 (VHGD…ERSP) and 357 to 366 (SVKEREKKQE). Positions 476–488 (NKMDERSNRQADH) are enriched in basic and acidic residues. Residues 708-811 (VKDAQCKVLE…SEPEKMNEVG (104 aa)) enclose the ASD1 domain. Residues 793-808 (TAEQKKRSYSEPEKMN) show a composition bias toward basic and acidic residues. Residues 893 to 903 (QSTYFSGSIMD) show a composition bias toward polar residues. Over residues 904–915 (NQSMTSTSSMNS) the composition is skewed to low complexity. Polar residues-rich tracts occupy residues 1055–1067 (EVGN…SASN), 1100–1124 (ENSS…SISG), and 1211–1263 (TSAQ…SEAE). Pro residues predominate over residues 1313 to 1323 (PPSPPPFPPPS). Over residues 1433 to 1451 (SILQSSEGNFNPSDSQSTL) the composition is skewed to polar residues. Positions 1467–1756 (QELAKEIVTK…QLRCLTESLP (290 aa)) constitute an ASD2 domain. The segment covering 1529–1538 (SEXKEEKRET) has biased composition (basic and acidic residues). A coiled-coil region spans residues 1653-1708 (RLARVENALSSLGEDASAEERKTWNEKKKQLCGQHEDARELKENLDRREKLVMDFL).

The protein belongs to the shroom family. As to quaternary structure, interacts with F-actin. Interacts with ROCK1. In terms of tissue distribution, expressed in epithelial cells of the cement gland.

It localises to the cell junction. It is found in the adherens junction. Its subcellular location is the cytoplasm. The protein localises to the cytoskeleton. The protein resides in the apical cell membrane. Controls cell shape changes in the neuroepithelium during neural tube closure. Induces apical constriction in epithelial cells by promoting the apical accumulation of F-actin and myosin II, and probably by bundling stress fibers. Induces apicobasal cell elongation by redistributing gamma-tubulin and directing the assembly of robust apicobasal microtubule arrays. In Xenopus laevis (African clawed frog), this protein is Protein Shroom3 (shroom3).